The sequence spans 377 residues: Interferon gamma receptor 1 (377 aa).

Positions 1-23 (MRTQIYISVTVLILLLKKSDLEA) are cleaved as a signal peptide. Residues 24–235 (VRVPSPESVS…IRRYTPFTVY (212 aa)) are Extracellular-facing. One can recognise a Fibronectin type-III domain in the interval 26–117 (VPSPESVSVQ…DFFIFSFNEN (92 aa)). N-linked (GlcNAc...) asparagine glycosylation is found at asparagine 78 and asparagine 186. A helical membrane pass occupies residues 236–256 (LYPVLGVTLTLLFITGIIILL). The Cytoplasmic portion of the chain corresponds to 257–377 (EKKCNSEMKK…TVDSYGPRLL (121 aa)). Positions 326–377 (VYSEDKNSYGPNDLVEDEQSDLSDFYDCPHAPKQKREMSPGDTVDSYGPRLL) are disordered.

Belongs to the type II cytokine receptor family. As to expression, highly expressed in spleen. Also detected in brain, kidney, gill, intestine and heart. Expressed at very low levels in muscle. In immune cell populations, shows highest expression in monocytes, and slightly lower expression in peripheral blood leukocytes, splenocytes, neutrophils and mature macrophages.

The protein resides in the cell membrane. In terms of biological role, receptor which shows binding specificity for the cytokine ifng1r (interferon gamma-related). This chain is Interferon gamma receptor 1, found in Carassius auratus (Goldfish).